The sequence spans 395 residues: Flap endonuclease 1 (395 aa).

The segment at 1–108 (MGILGLSKLL…DELEMRRQKA (108 aa)) is N-domain. Aspartate 34 provides a ligand contact to Mg(2+). Arginine 74 is a binding site for DNA. Mg(2+) contacts are provided by aspartate 90, glutamate 162, glutamate 164, aspartate 183, and aspartate 185. An I-domain region spans residues 126–257 (MMEKMSKRTV…QKAWEGIQRY (132 aa)). Glutamate 162 contacts DNA. Residues glycine 235 and aspartate 237 each coordinate DNA. Aspartate 237 contributes to the Mg(2+) binding site. The tract at residues 340 to 348 (TQGRLDSFF) is interaction with PCNA.

This sequence belongs to the XPG/RAD2 endonuclease family. FEN1 subfamily. In terms of assembly, interacts with PCNA. Three molecules of FEN1 bind to one PCNA trimer with each molecule binding to one PCNA monomer. PCNA stimulates the nuclease activity without altering cleavage specificity. Mg(2+) serves as cofactor. Post-translationally, phosphorylated. Phosphorylation upon DNA damage induces relocalization to the nuclear plasma.

Its subcellular location is the nucleus. The protein localises to the nucleolus. It localises to the nucleoplasm. The protein resides in the mitochondrion. In terms of biological role, structure-specific nuclease with 5'-flap endonuclease and 5'-3' exonuclease activities involved in DNA replication and repair. During DNA replication, cleaves the 5'-overhanging flap structure that is generated by displacement synthesis when DNA polymerase encounters the 5'-end of a downstream Okazaki fragment. It enters the flap from the 5'-end and then tracks to cleave the flap base, leaving a nick for ligation. Also involved in the long patch base excision repair (LP-BER) pathway, by cleaving within the apurinic/apyrimidinic (AP) site-terminated flap. Acts as a genome stabilization factor that prevents flaps from equilibrating into structures that lead to duplications and deletions. Also possesses 5'-3' exonuclease activity on nicked or gapped double-stranded DNA, and exhibits RNase H activity. Also involved in replication and repair of rDNA and in repairing mitochondrial DNA. The protein is Flap endonuclease 1 of Leishmania infantum.